The chain runs to 548 residues: Ankyrin repeat domain-containing protein SOWAHA (548 aa).

A signal peptide spans 1–19; sequence MALAAAAAAAAAAAGVSQA. Positions 114 to 212 are disordered; it reads EDNCAPGAPH…PPTAQVPPQK (99 aa). Residues 136–153 show a composition bias toward polar residues; that stretch reads SAPSELQHTPETLPSEVT. The span at 198-212 shows a compositional bias: pro residues; it reads GPEPAPPTAQVPPQK. Ser258 bears the Phosphoserine mark. ANK repeat units lie at residues 344–373 and 383–413; these read SGFT…RGGA and GGYT…QVHV. The tract at residues 512-548 is disordered; it reads PRKKTKIRGGLPSFTEISHRSTPGPLAGLVPSLPPPT.

The protein belongs to the SOWAH family.

The protein is Ankyrin repeat domain-containing protein SOWAHA (Sowaha) of Mus musculus (Mouse).